A 597-amino-acid polypeptide reads, in one-letter code: Elongation factor 4 (597 aa).

The tr-type G domain occupies 2 to 184; the sequence is KNIRNFSIIA…EVVNKIPPPK (183 aa). Residues 14–19 and 131–134 each bind GTP; these read DHGKST and NKID.

The protein belongs to the TRAFAC class translation factor GTPase superfamily. Classic translation factor GTPase family. LepA subfamily.

It localises to the cell inner membrane. The catalysed reaction is GTP + H2O = GDP + phosphate + H(+). In terms of biological role, required for accurate and efficient protein synthesis under certain stress conditions. May act as a fidelity factor of the translation reaction, by catalyzing a one-codon backward translocation of tRNAs on improperly translocated ribosomes. Back-translocation proceeds from a post-translocation (POST) complex to a pre-translocation (PRE) complex, thus giving elongation factor G a second chance to translocate the tRNAs correctly. Binds to ribosomes in a GTP-dependent manner. The polypeptide is Elongation factor 4 (Chromobacterium violaceum (strain ATCC 12472 / DSM 30191 / JCM 1249 / CCUG 213 / NBRC 12614 / NCIMB 9131 / NCTC 9757 / MK)).